The chain runs to 161 residues: Putative defense protein 2 (161 aa).

The first 11 residues, 1 to 11, serve as a signal peptide directing secretion; the sequence is LSWSALALTSA. Residues 12-161 form the Reelin domain; the sequence is YPTGAPTSAC…SAPVKILSHH (150 aa). Cys21 and Cys98 are joined by a disulfide. Asn91 carries an N-linked (GlcNAc...) asparagine glycan.

Belongs to the insect defense protein family.

It localises to the secreted. Functionally, may have antimicrobial activity. This Antheraea mylitta (Tasar silkworm) protein is Putative defense protein 2.